Consider the following 980-residue polypeptide: SLIT and NTRK-like protein 3 (980 aa).

Positions 1–27 are cleaved as a signal peptide; sequence MMKPSIAEMLHRGRMLWIILLSTIALG. At 30-655 the chain is on the extracellular side; the sequence is TPIPLIEDSE…SPPGGPVPLS (626 aa). Asn-69 carries an N-linked (GlcNAc...) asparagine glycan. 6 LRR repeats span residues 79–100, 103–124, 127–148, 151–172, 175–196, and 198–219; these read RPFKLYLQRNSMRRLYTNSFLH, NAVSINLGNNALQDIQTGAFNG, ILKRLYLHENKLDVFRNDTFLG, SLEYLQADYNVIKRIESGAFRN, KLRVLILNDNLIPVLPTNLFKA, and SLTHLDLRGNRLKVLFYRGMLD. Residues 233 to 284 form the LRRCT 1 domain; that stretch reads NPWNCTCEIVQLKSWLERIPYTALVGDITCETPFHFHGKDLREIKKTELCPL. The segment at 326–361 is disordered; that stretch reads EYKSSNKQPKPTKQPRTPRPPSTSQALYPGPNQPPI. In terms of domain architecture, LRRNT spans 365-407; it reads QTRPPIPIICPTGCTCNLHINDLGLTVNCKERGFNNISELLPR. LRR repeat units follow at residues 410-431, 434-455, 458-479, 482-503, 506-527, and 529-550; these read NAKKLYLSSNLIQKIYRSDFWN, SLDLLHLGNNRISYVQDGAFIN, NLKSLFLNGNDIEKLTPGMFRG, SLHYLYFEFNVIREIQPAAFSL, NLKLLFLNNNLLRTLPTDAFAG, and SLARLNLRKNYFLYLPVAGVLE. The LRRCT 2 domain occupies 563–614; sequence NPWDCTCDLVPFKQWIETISSVSVVGDVLCRTPENLTHRDVRTIELEVLCPE. Asn-597 is a glycosylation site (N-linked (GlcNAc...) asparagine). The interval 622–644 is disordered; it reads GPSPPQPGDYHPNGGPTSASPYE. The helical transmembrane segment at 656 to 676 threads the bilayer; it reads VLILSLLVLFFSAVFVAAGLF. The Cytoplasmic portion of the chain corresponds to 677–980; that stretch reads AYVLRRRRKK…EVLEKTAYRF (304 aa). Disordered stretches follow at residues 709-735 and 762-785; these read LFEDSGGNSGGSGGGGRPTLSSPEKAP and EEEVAASAAQDTGATDRGGPGTQP. Residues 715 to 725 are compositionally biased toward gly residues; it reads GNSGGSGGGGR.

It belongs to the SLITRK family. In terms of tissue distribution, broadly expressed in embryonic brain with highest expression in cortical plate, pyramidal cell layer of the hippocampus, thalamus and hypothalamus.

It is found in the membrane. In terms of biological role, suppresses neurite outgrowth. This is SLIT and NTRK-like protein 3 (Slitrk3) from Mus musculus (Mouse).